A 297-amino-acid polypeptide reads, in one-letter code: Lymphocyte antigen 6 complex locus protein G6f (297 aa).

Positions 1-16 (MAVLFLLLFLCGTPQA) are cleaved as a signal peptide. One can recognise an Ig-like V-type domain in the interval 17-122 (ADNMQAIYVA…HNYQNWRVYD (106 aa)). At 17-235 (ADNMQAIYVA…APSTGWDMPW (219 aa)) the chain is on the extracellular side. An intrachain disulfide couples cysteine 35 to cysteine 106. Residue asparagine 88 is glycosylated (N-linked (GlcNAc...) asparagine). A helical membrane pass occupies residues 236 to 256 (ILMLLLTMGQGVVILALSIVL). Topologically, residues 257–297 (WRQRVRGAPGRDASIPQFKPEIQVYENIHLARLGPPAHKPR) are cytoplasmic. Position 281 is a phosphotyrosine (tyrosine 281).

As to quaternary structure, homodimer; disulfide-linked. Interacts with GRB2 and GRB7 in a phosphorylation-dependent manner. In terms of processing, N-glycosylated.

It is found in the cell membrane. In terms of biological role, may play a role in the downstream signal transduction pathways involving GRB2 and GRB7. The chain is Lymphocyte antigen 6 complex locus protein G6f (LY6G6F) from Homo sapiens (Human).